The chain runs to 199 residues: Probable chemoreceptor glutamine deamidase CheD (199 aa).

It belongs to the CheD family.

It carries out the reaction L-glutaminyl-[protein] + H2O = L-glutamyl-[protein] + NH4(+). Functionally, probably deamidates glutamine residues to glutamate on methyl-accepting chemotaxis receptors (MCPs), playing an important role in chemotaxis. The protein is Probable chemoreceptor glutamine deamidase CheD of Cereibacter sphaeroides (strain ATCC 17025 / ATH 2.4.3) (Rhodobacter sphaeroides).